The sequence spans 469 residues: Lipase A (469 aa).

Residues 1–22 (MMFLTQLVSALFLFFLGPISYG) form the signal peptide. Residues 40-51 (PSEDPFYQPPPG) are compositionally biased toward pro residues. The tract at residues 40–59 (PSEDPFYQPPPGYEETEPGT) is disordered. Asn111 carries an N-linked (GlcNAc...) asparagine glycan. Residues Cys129 and Cys304 are joined by a disulfide bond. Residues Ser217, Asp361, and His393 each act as charge relay system in the active site. A disulfide bridge links Cys377 with Cys421.

It belongs to the AB hydrolase superfamily. Lipase family. Class Lip subfamily. As to quaternary structure, monomer.

It localises to the secreted. It carries out the reaction a triacylglycerol + H2O = a diacylglycerol + a fatty acid + H(+). Hydrolyzes triglycerides, with a preference for substrates with short-chain lengths (C4 to C8). This Arthroderma benhamiae (strain ATCC MYA-4681 / CBS 112371) (Trichophyton mentagrophytes) protein is Lipase A.